A 502-amino-acid chain; its full sequence is Cytochrome P450 monooxygenase orf6 (502 aa).

Residues 3–25 traverse the membrane as a helical segment; it reads ALWVLAVALVAYFLCLSIYRLFL. An N-linked (GlcNAc...) asparagine glycan is attached at N382. A heme-binding site is contributed by C445.

Belongs to the cytochrome P450 family. Heme is required as a cofactor.

It is found in the membrane. It participates in mycotoxin biosynthesis. Its function is as follows. Cytochrome P450 monooxygenase; part of the gene cluster that mediates the biosynthesis of brefeldin A (BFA), a protein transport inhibitor that shows antiviral, antifungal, and antitumor properties. The proposed biosynthesis of BFA involves formation of an acyclic polyketide chain that is differentially tailored throughout the backbone. The highly reducing polyketide synthase Bref-PKS is proposed to synthesize the precisely reduced octaketide precursor, which could then be directly offloaded by the thiohydrolase enzyme Bref-TH followed by a cytochrome P450 monooxygenase-mediated formation of the cyclopentane ring and macrocyclization to afford 7-deoxy BFA. Alternatively, the first ring annulation can also occur on the ACP-tethered intermediate before the thiohydrolase release and lactonization. The C7-hydroxylation by another cytochrome P450 monooxygenase is believed to be the final step in the process to obtain the final structure of BFA. In addition to the HRPKS Bref-PKS and the thiohydrolase Bref-TH, the brefeldin A biosynthesis cluster contains 4 cytochrome p450 monooxygenases (called orf3 to orf6), as well a the probable cluster-specific transcription regulator orf8. This chain is Cytochrome P450 monooxygenase orf6, found in Eupenicillium brefeldianum (Penicillium brefeldianum).